The primary structure comprises 375 residues: tRNA-specific 2-thiouridylase MnmA (375 aa).

ATP contacts are provided by residues 12-19 and Met38; that span reads GMSGGVDS. The segment at 98–100 is interaction with target base in tRNA; it reads NPD. Cys103 acts as the Nucleophile in catalysis. A disulfide bridge links Cys103 with Cys200. An ATP-binding site is contributed by Gly127. The segment at 150–152 is interaction with tRNA; it reads KDQ. Cys200 acts as the Cysteine persulfide intermediate in catalysis. The tract at residues 312 to 313 is interaction with tRNA; the sequence is RY.

The protein belongs to the MnmA/TRMU family.

The protein resides in the cytoplasm. It catalyses the reaction S-sulfanyl-L-cysteinyl-[protein] + uridine(34) in tRNA + AH2 + ATP = 2-thiouridine(34) in tRNA + L-cysteinyl-[protein] + A + AMP + diphosphate + H(+). Catalyzes the 2-thiolation of uridine at the wobble position (U34) of tRNA, leading to the formation of s(2)U34. The sequence is that of tRNA-specific 2-thiouridylase MnmA from Lactobacillus gasseri (strain ATCC 33323 / DSM 20243 / BCRC 14619 / CIP 102991 / JCM 1131 / KCTC 3163 / NCIMB 11718 / NCTC 13722 / AM63).